A 413-amino-acid polypeptide reads, in one-letter code: Aspartate aminotransferase, cytoplasmic (413 aa).

The L-aspartate site is built by Gly39, Trp141, and Asn195. At Lys259 the chain carries N6-(pyridoxal phosphate)lysine. Residue Arg387 coordinates L-aspartate.

The protein belongs to the class-I pyridoxal-phosphate-dependent aminotransferase family. In terms of assembly, homodimer. It depends on pyridoxal 5'-phosphate as a cofactor.

The protein localises to the cytoplasm. It carries out the reaction L-aspartate + 2-oxoglutarate = oxaloacetate + L-glutamate. It catalyses the reaction L-cysteine + 2-oxoglutarate = 2-oxo-3-sulfanylpropanoate + L-glutamate. The catalysed reaction is (2S)-2-aminobutanoate + 2-oxoglutarate = 2-oxobutanoate + L-glutamate. The enzyme catalyses 3-sulfino-L-alanine + 2-oxoglutarate = 3-sulfinopyruvate + L-glutamate. Its function is as follows. Biosynthesis of L-glutamate from L-aspartate or L-cysteine. Important regulator of levels of glutamate, the major excitatory neurotransmitter of the vertebrate central nervous system. Acts as a scavenger of glutamate in brain neuroprotection. The aspartate aminotransferase activity is involved in hepatic glucose synthesis during development and in adipocyte glyceroneogenesis. Using L-cysteine as substrate, regulates levels of mercaptopyruvate, an important source of hydrogen sulfide. Mercaptopyruvate is converted into H(2)S via the action of 3-mercaptopyruvate sulfurtransferase (3MST). Hydrogen sulfide is an important synaptic modulator and neuroprotectant in the brain. The polypeptide is Aspartate aminotransferase, cytoplasmic (Bos taurus (Bovine)).